The chain runs to 537 residues: Exoglucanase 1 (537 aa).

The signal sequence occupies residues 1 to 18 (MKGSISYQIYKGALLLSA). A catalytic region spans residues 19 to 453 (LLNSVSAQQV…YVIYSNIKTG (435 aa)). N136 carries an N-linked (GlcNAc...) asparagine glycan. E235 functions as the Nucleophile in the catalytic mechanism. E240 functions as the Proton donor in the catalytic mechanism. Residues N414 and N456 are each glycosylated (N-linked (GlcNAc...) asparagine). The linker stretch occupies residues 454 to 477 (PLNSTFTGGTTSSSSTTTTTSKST). The segment covering 458-502 (TFTGGTTSSSSTTTTTSKSTSTSSSSKTTTTVTTTTTSSGSSGTG) has biased composition (low complexity). Residues 458–503 (TFTGGTTSSSSTTTTTSKSTSTSSSSKTTTTVTTTTTSSGSSGTGA) form a disordered region. Positions 501–537 (TGARDWAQCGGNGWTGPTTCVSPYTCTKQNDWYSQCL) constitute a CBM1 domain. 2 disulfides stabilise this stretch: C509–C526 and C520–C536.

The protein belongs to the glycosyl hydrolase 7 (cellulase C) family.

It is found in the secreted. It carries out the reaction Hydrolysis of (1-&gt;4)-beta-D-glucosidic linkages in cellulose and cellotetraose, releasing cellobiose from the non-reducing ends of the chains.. This Penicillium janthinellum (Penicillium vitale) protein is Exoglucanase 1 (cbh1).